We begin with the raw amino-acid sequence, 980 residues long: Ovochymase-2 (980 aa).

A signal peptide spans 1–21 (MAETSVFSIMMLTVMTAVGRG). Positions 22–49 (ATDRPGRVSRCGERPSANASVTYNLLSR) are cleaved as a propeptide — activation peptide. N39 is a glycosylation site (N-linked (GlcNAc...) asparagine). The 250-residue stretch at 50 to 299 (IVGGTSAVKG…LLNWLSANLN (250 aa)) folds into the Peptidase S1 1 domain. An intrachain disulfide couples C75 to C91. H90 (charge relay system) is an active-site residue. Residues V112 and E117 each contribute to the Ca(2+) site. D140 functions as the Charge relay system in the catalytic mechanism. 11 disulfides stabilise this stretch: C174/C244, C205/C223, C234/C263, C312/C342, C369/C388, C435/C462, C489/C510, C618/C634, C716/C779, C744/C757, and C769/C798. The Charge relay system role is filled by S238. CUB domains follow at residues 312–425 (CSTN…YQAV) and 435–547 (CGSV…ISFV). Residues 593 to 822 (IIKAEEAMPN…FIPWIMETIL (230 aa)) enclose the Peptidase S1 2 domain. A propeptide spans 593-980 (IIKAEEAMPN…WLSYSFHNQN (388 aa)) (activation peptide). A glycan (N-linked (GlcNAc...) asparagine) is linked at N766. The disordered stretch occupies residues 835-863 (HHPLIPPDKLSQEKALLPDSPPSNDSSSS). 2 N-linked (GlcNAc...) asparagine glycosylation sites follow: N858 and N932.

The protein belongs to the peptidase S1 family. Post-translationally, the catalytically inactive 108 kDa form is processed both N- and C-terminally to give rise to catalytically active and inactive forms. Differentially expressed in the oviductal pars recta (PR) region.

It is found in the secreted. It carries out the reaction Preferential cleavage at 371-Gly-Ser-Arg-|-Trp-374 of glycoprotein gp43 in Xenopus laevis coelemic egg envelope to yield gp41.. Mediates gamete interaction by affecting the vitelline coat. The sequence is that of Ovochymase-2 (OVCH2) from Rhinella arenarum (Argentine common toad).